Here is a 116-residue protein sequence, read N- to C-terminus: Large ribosomal subunit protein bL17 (116 aa).

The protein belongs to the bacterial ribosomal protein bL17 family. As to quaternary structure, part of the 50S ribosomal subunit. Contacts protein L32.

This Dictyoglomus turgidum (strain DSM 6724 / Z-1310) protein is Large ribosomal subunit protein bL17.